The primary structure comprises 215 residues: Probable GTP-binding protein EngB (215 aa).

Residues 26-200 (EGIEVAFAGR…RAKLDEWFAP (175 aa)) enclose the EngB-type G domain. Residues 34–41 (GRSNAGKS), 61–65 (GRTQL), 79–82 (DLPG), 146–149 (TKAD), and 179–181 (FSS) each bind GTP. The Mg(2+) site is built by S41 and T63.

It belongs to the TRAFAC class TrmE-Era-EngA-EngB-Septin-like GTPase superfamily. EngB GTPase family. It depends on Mg(2+) as a cofactor.

In terms of biological role, necessary for normal cell division and for the maintenance of normal septation. This Aliivibrio fischeri (strain MJ11) (Vibrio fischeri) protein is Probable GTP-binding protein EngB.